Consider the following 155-residue polypeptide: Fibroblast growth factor 2 (155 aa).

Residues 1–9 (MAAGSITTL) constitute a propeptide that is removed on maturation. A disordered region spans residues 1–20 (MAAGSITTLPALPEDGGSGA). Heparin is bound at residue asparagine 36. The short motif at 46 to 48 (DGR) is the Cell attachment site; atypical element. Tyrosine 82 bears the Phosphotyrosine; by TEC mark. The Cell attachment site; atypical signature appears at 88–90 (DGR). Residue lysine 95 forms a Glycyl lysine isopeptide (Lys-Gly) (interchain with G-Cter in SUMO1) linkage. Residues 128–144 (KRTGQYKLGPKTGPGQK) form a heparin-binding region.

Belongs to the heparin-binding growth factors family. As to quaternary structure, monomer. Homodimer. Interacts with FGFR1, FGFR2, FGFR3 and FGFR4. Affinity between fibroblast growth factors (FGFs) and their receptors is increased by heparan sulfate glycosaminoglycans that function as coreceptors. Interacts with CSPG4, FGFBP1 and TEC. Found in a complex with FGFBP1, FGF1 and FGF2. Interacts with FGFBP3. Interacts with integrin ITGAV:ITGB3; the interaction is required for FGF2 signaling. Interacts with SNORC (via the extracellular domain). Interacts with glypican GPC3. Phosphorylation at Tyr-82 regulates FGF2 unconventional secretion.

The protein resides in the secreted. It is found in the nucleus. Its function is as follows. Acts as a ligand for FGFR1, FGFR2, FGFR3 and FGFR4. Also acts as an integrin ligand which is required for FGF2 signaling. Binds to integrin ITGAV:ITGB3. Plays an important role in the regulation of cell survival, cell division, cell differentiation and cell migration. Functions as a potent mitogen in vitro. Can induce angiogenesis. Mediates phosphorylation of ERK1/2 and thereby promotes retinal lens fiber differentiation. The protein is Fibroblast growth factor 2 (FGF2) of Bos taurus (Bovine).